An 83-amino-acid chain; its full sequence is Cytochrome c oxidase subunit 7A2, mitochondrial (83 aa).

A mitochondrion-targeting transit peptide spans 1-23 (MLRNVLALRQIAQRTISTTSRRH). Residues 24–48 (FENKVPEKQKLFQEDNGMPVHLKGG) are Mitochondrial matrix-facing. Lys33 carries the N6-acetyllysine modification. The chain crosses the membrane as a helical span at residues 49–77 (TSDALLYRATMLLTVGGTAYAIYMLAMAA). Over 78 to 83 (FPKKQN) the chain is Mitochondrial intermembrane.

This sequence belongs to the cytochrome c oxidase VIIa family. Component of the cytochrome c oxidase (complex IV, CIV), a multisubunit enzyme composed of 14 subunits. The complex is composed of a catalytic core of 3 subunits MT-CO1, MT-CO2 and MT-CO3, encoded in the mitochondrial DNA, and 11 supernumerary subunits COX4I, COX5A, COX5B, COX6A, COX6B, COX6C, COX7A, COX7B, COX7C, COX8 and NDUFA4, which are encoded in the nuclear genome. The complex exists as a monomer or a dimer and forms supercomplexes (SCs) in the inner mitochondrial membrane with NADH-ubiquinone oxidoreductase (complex I, CI) and ubiquinol-cytochrome c oxidoreductase (cytochrome b-c1 complex, complex III, CIII), resulting in different assemblies (supercomplex SCI(1)III(2)IV(1) and megacomplex MCI(2)III(2)IV(2)). Interacts with PET100.

The protein localises to the mitochondrion inner membrane. Its pathway is energy metabolism; oxidative phosphorylation. Its function is as follows. Component of the cytochrome c oxidase, the last enzyme in the mitochondrial electron transport chain which drives oxidative phosphorylation. The respiratory chain contains 3 multisubunit complexes succinate dehydrogenase (complex II, CII), ubiquinol-cytochrome c oxidoreductase (cytochrome b-c1 complex, complex III, CIII) and cytochrome c oxidase (complex IV, CIV), that cooperate to transfer electrons derived from NADH and succinate to molecular oxygen, creating an electrochemical gradient over the inner membrane that drives transmembrane transport and the ATP synthase. Cytochrome c oxidase is the component of the respiratory chain that catalyzes the reduction of oxygen to water. Electrons originating from reduced cytochrome c in the intermembrane space (IMS) are transferred via the dinuclear copper A center (CU(A)) of subunit 2 and heme A of subunit 1 to the active site in subunit 1, a binuclear center (BNC) formed by heme A3 and copper B (CU(B)). The BNC reduces molecular oxygen to 2 water molecules using 4 electrons from cytochrome c in the IMS and 4 protons from the mitochondrial matrix. This chain is Cytochrome c oxidase subunit 7A2, mitochondrial (Cox7a2), found in Rattus norvegicus (Rat).